Reading from the N-terminus, the 262-residue chain is Nitrilase (262 aa).

The CN hydrolase domain occupies 2-237; it reads VKVAYVQMNP…EEVGVAEIDL (236 aa). Catalysis depends on E42, which acts as the Proton acceptor. Catalysis depends on K113, which acts as the Proton donor. C146 serves as the catalytic Nucleophile. 173–174 serves as a coordination point for substrate; sequence VM.

It belongs to the carbon-nitrogen hydrolase superfamily. Homodimer.

The catalysed reaction is a nitrile + 2 H2O = a carboxylate + NH4(+). Its activity is regulated as follows. Enzymatic activity is inhibited in the presence of acetone, methanol and metal ions such as Ag(2+) and Hg(2+). Is also inhibited by various thiol reagents such as DTNB, p-chloromercuribenzoate, p-hydroxymercuribenzoate, iodacetamide and iodacetate. EDTA has no influence on activity. Functionally, nitrilase that hydrolyzes preferentially aliphatic nitriles like malononitrile and fumaronitrile in vitro. These dinitriles are converted to the corresponding monoacid mononitriles, showing the enzyme is regioselective. Cannot hydrolyze compounds with a nitrile group bound to an aromatic ring or amino acid. Its biological role is unknown. This Pyrococcus abyssi (strain GE5 / Orsay) protein is Nitrilase.